Consider the following 1314-residue polypeptide: Tetratricopeptide repeat protein 21A (1314 aa).

19 TPR repeats span residues 110–143 (STAL…SSGS), 214–247 (LPAL…DENN), 326–359 (ALVA…EENR), 494–527 (MEPL…DPTF), 529–561 (DAHL…NFQV), 565–598 (PLYH…PTSK), 616–649 (ASIL…FSGT), 721–754 (PHSS…NPHD), 755–788 (ASLV…SGQD), 790–821 (LCCE…DSGV), 831–863 (VKCL…QSRI), 883–916 (ASIC…SPTD), 918–950 (KVVL…EQTH), 951–984 (ERAA…APDN), 986–1018 (LVLN…SSRV), 1022–1055 (PGFN…STWG), 1195–1228 (EKSW…NKSC), 1230–1262 (RAYE…SHQA), and 1264–1297 (PAIG…HPKY).

The protein belongs to the TTC21 family. As to quaternary structure, interacts with IFT20. Interacts with IFT52. Interacts with IFT140. Interacts with CEP78; regulating IFT20 stability and localization.

Intraflagellar transport (IFT)-associated protein required for spermatogenesis. Required for sperm flagellar formation and intraflagellar transport. The polypeptide is Tetratricopeptide repeat protein 21A (Ttc21a) (Mus musculus (Mouse)).